A 440-amino-acid chain; its full sequence is Chaperone SurA (440 aa).

The N-terminal stretch at 1–25 (MGTKLSSRSPFSLPFLTLLAGMAIA) is a signal peptide. 2 PpiC domains span residues 182 to 283 (SDEY…KLVE) and 294 to 392 (IDQT…QVIE).

It localises to the periplasm. It carries out the reaction [protein]-peptidylproline (omega=180) = [protein]-peptidylproline (omega=0). Its function is as follows. Chaperone involved in the correct folding and assembly of outer membrane proteins. Recognizes specific patterns of aromatic residues and the orientation of their side chains, which are found more frequently in integral outer membrane proteins. May act in both early periplasmic and late outer membrane-associated steps of protein maturation. The chain is Chaperone SurA from Nitrosospira multiformis (strain ATCC 25196 / NCIMB 11849 / C 71).